The following is a 129-amino-acid chain: Replication initiation control protein YabA (129 aa).

The disordered stretch occupies residues 52 to 71 (LSLTDEATPEPKAETEAEHG). Basic and acidic residues predominate over residues 60–71 (PEPKAETEAEHG). Positions 103, 105, 119, and 122 each coordinate Zn(2+).

This sequence belongs to the YabA family. Homotetramer. Interacts with both DnaA and DnaN, acting as a bridge between these two proteins. Zn(2+) is required as a cofactor.

It is found in the cytoplasm. It localises to the nucleoid. In terms of biological role, involved in control of chromosome replication initiation. Inhibits the cooperative binding of DnaA to the oriC region, thus negatively regulating initiation of chromosome replication. Inhibits the ability of DnaA-ATP to form a helix on DNA; does not disassemble preformed DnaA-DNA helices. Decreases the residence time of DnaA on the chromosome at its binding sites (oriC, replication forks and promoter-binding sites). Tethers DnaA to the replication machinery via the DNA polymerase beta sliding clamp subunit (dnaN). Associates with oriC and other DnaA targets on the chromosome in a DnaA-dependent manner. The chain is Replication initiation control protein YabA from Listeria monocytogenes serotype 4a (strain HCC23).